The chain runs to 319 residues: Protein HEXIM1 (319 aa).

Residues 1–22 (MELIKEETAPEDDSRGRQRDCR) are compositionally biased toward basic and acidic residues. Disordered stretches follow at residues 1-111 (MELI…KKRR), 157-223 (LMEE…LQKD), 262-286 (NNWLRHVRRNPESPADGTGSQRVRE), and 299-319 (NELLLKTPASNEPGLNQSQPS). Over residues 24-35 (SVVSSKQVQRNQ) the composition is skewed to polar residues. The span at 49–61 (PMCRDRSDPEPRT) shows a compositional bias: basic and acidic residues. The segment covering 97–111 (GKKKHRRRPSKKKRR) has biased composition (basic residues). The span at 185–202 (TASEDENFEAEEDDEEEG) shows a compositional bias: acidic residues. Over residues 203–216 (GGGSDGMGRPGQAG) the composition is skewed to gly residues. The stretch at 240–306 (SKQELVREYL…ENNELLLKTP (67 aa)) forms a coiled coil. The span at 306–319 (PASNEPGLNQSQPS) shows a compositional bias: polar residues.

Belongs to the HEXIM family. As to quaternary structure, homooligomer and heterooligomer. Core component of the 7SK RNP complex.

Its subcellular location is the nucleus. The protein resides in the cytoplasm. Functionally, transcriptional regulator which functions as a general RNA polymerase II transcription inhibitor. Core component of the 7SK RNP complex: in cooperation with 7SK snRNA sequesters P-TEFb in a large inactive 7SK snRNP complex preventing RNA polymerase II phosphorylation and subsequent transcriptional elongation. Plays a role in the regulation of DNA virus-mediated innate immune response by assembling into the HDP-RNP complex, a complex that serves as a platform for IRF3 phosphorylation and subsequent innate immune response activation through the cGAS-STING pathway. The protein is Protein HEXIM1 (hexim1) of Danio rerio (Zebrafish).